The primary structure comprises 212 residues: Peptide methionine sulfoxide reductase MsrA (212 aa).

C52 is an active-site residue.

It belongs to the MsrA Met sulfoxide reductase family.

It catalyses the reaction L-methionyl-[protein] + [thioredoxin]-disulfide + H2O = L-methionyl-(S)-S-oxide-[protein] + [thioredoxin]-dithiol. The catalysed reaction is [thioredoxin]-disulfide + L-methionine + H2O = L-methionine (S)-S-oxide + [thioredoxin]-dithiol. Functionally, has an important function as a repair enzyme for proteins that have been inactivated by oxidation. Catalyzes the reversible oxidation-reduction of methionine sulfoxide in proteins to methionine. The polypeptide is Peptide methionine sulfoxide reductase MsrA (Salmonella paratyphi B (strain ATCC BAA-1250 / SPB7)).